The primary structure comprises 210 residues: 2,3-bisphosphoglycerate-dependent phosphoglycerate mutase (210 aa).

Substrate is bound by residues 9-16 (RHGQSEWN), 22-23 (TG), Arg-61, 88-91 (ERDY), Lys-99, 115-116 (RR), and 159-160 (GN). His-10 (tele-phosphohistidine intermediate) is an active-site residue. Glu-88 (proton donor/acceptor) is an active-site residue.

Belongs to the phosphoglycerate mutase family. BPG-dependent PGAM subfamily. Homodimer.

It catalyses the reaction (2R)-2-phosphoglycerate = (2R)-3-phosphoglycerate. Its pathway is carbohydrate degradation; glycolysis; pyruvate from D-glyceraldehyde 3-phosphate: step 3/5. Functionally, catalyzes the interconversion of 2-phosphoglycerate and 3-phosphoglycerate. The sequence is that of 2,3-bisphosphoglycerate-dependent phosphoglycerate mutase from Parvibaculum lavamentivorans (strain DS-1 / DSM 13023 / NCIMB 13966).